A 177-amino-acid chain; its full sequence is Putative 3-methyladenine DNA glycosylase (177 aa).

This sequence belongs to the DNA glycosylase MPG family.

The sequence is that of Putative 3-methyladenine DNA glycosylase from Rickettsia felis (strain ATCC VR-1525 / URRWXCal2) (Rickettsia azadi).